Consider the following 734-residue polypeptide: Photosystem I P700 chlorophyll a apoprotein A2 (734 aa).

The next 8 membrane-spanning stretches (helical) occupy residues 46–69 (IFAS…FHVA), 135–158 (LYGG…LHLQ), 175–199 (LNHH…HVAI), 273–291 (MAHH…GHMY), 330–353 (LHFQ…QHMY), 369–395 (AALY…IFFI), 417–439 (AIIS…LYVH), and 517–535 (FLVH…LILV). [4Fe-4S] cluster is bound by residues cysteine 559 and cysteine 568. The next 2 helical transmembrane spans lie at 575–596 (AFYL…YWHW) and 643–665 (LSVW…MFLI). Chlorophyll a contacts are provided by histidine 654, methionine 662, and tyrosine 670. Residue tryptophan 671 participates in phylloquinone binding. Residues 707 to 727 (LVGLAHFSVGYIFTYAAFLIA) form a helical membrane-spanning segment.

Belongs to the PsaA/PsaB family. In terms of assembly, the PsaA/B heterodimer binds the P700 chlorophyll special pair and subsequent electron acceptors. PSI consists of a core antenna complex that captures photons, and an electron transfer chain that converts photonic excitation into a charge separation. The eukaryotic PSI reaction center is composed of at least 11 subunits. P700 is a chlorophyll a/chlorophyll a' dimer, A0 is one or more chlorophyll a, A1 is one or both phylloquinones and FX is a shared 4Fe-4S iron-sulfur center. is required as a cofactor.

It localises to the plastid. Its subcellular location is the chloroplast thylakoid membrane. The enzyme catalyses reduced [plastocyanin] + hnu + oxidized [2Fe-2S]-[ferredoxin] = oxidized [plastocyanin] + reduced [2Fe-2S]-[ferredoxin]. In terms of biological role, psaA and PsaB bind P700, the primary electron donor of photosystem I (PSI), as well as the electron acceptors A0, A1 and FX. PSI is a plastocyanin-ferredoxin oxidoreductase, converting photonic excitation into a charge separation, which transfers an electron from the donor P700 chlorophyll pair to the spectroscopically characterized acceptors A0, A1, FX, FA and FB in turn. Oxidized P700 is reduced on the lumenal side of the thylakoid membrane by plastocyanin. The protein is Photosystem I P700 chlorophyll a apoprotein A2 of Physcomitrium patens (Spreading-leaved earth moss).